A 287-amino-acid chain; its full sequence is Agamous-like MADS-box protein AGL53 (287 aa).

An MADS-box domain is found at 30-78; that stretch reads STAKKTTNLSMREQTMFKKALELSTLCNIDVCVIYYGRDGKLIKTWPED. The disordered stretch occupies residues 151–171; it reads EFGQTRAVSSTTNPLSPPPSL.

In terms of assembly, interacts with MEE14/CBP1.

The protein localises to the nucleus. Functionally, probable transcription factor that may function in the maintenance of the proper function of the central cell in pollen tube attraction. The polypeptide is Agamous-like MADS-box protein AGL53 (Arabidopsis thaliana (Mouse-ear cress)).